We begin with the raw amino-acid sequence, 622 residues long: Polyprotein p69 (622 aa).

The region spanning 1–248 (MSCLRKPSQS…AARDPLARIG (248 aa)) is the Peptidase C7 domain. Active-site for papain-like protease p29 activity residues include C162 and H215.

In terms of processing, autocatalytically processed.

P40 protein is involved in reduction of conidiation of the host. Not necessary for replication. Also involved in reduction of orange pigmentation of the host. Functionally, cysteine protease of the peptidase family C7 that contributes to hypovirulence-associated traits like the reduction in conidiation and laccase activity, but not to virulence attenuation. Acts as a suppressor of RNA-mediated gene silencing, also known as post-transcriptional gene silencing (PTGS), a mechanism of viral defense that limits the accumulation of viral RNAs. Enhances viral dsRNA accumulation and virus transmission. Also involved in the reduction in orange pigmentation of the host, an effect independent of the intrinsic protease activity. This Cryphonectria hypovirus 1 (strain Euro7) (CHV-1/Euro7) protein is Polyprotein p69.